Consider the following 388-residue polypeptide: Protein-glutamate methylesterase/protein-glutamine glutaminase (388 aa).

Positions 20 to 138 (RVMVVDDSVV…ESAGAEVFRH (119 aa)) constitute a Response regulatory domain. Aspartate 71 is modified (4-aspartylphosphate). Residues 193–386 (PTAPRVLLIG…PKLVRLFSGD (194 aa)) enclose the CheB-type methylesterase domain. Catalysis depends on residues serine 204, histidine 232, and aspartate 328.

It belongs to the CheB family. In terms of processing, phosphorylated by CheA. Phosphorylation of the N-terminal regulatory domain activates the methylesterase activity.

The protein localises to the cytoplasm. It carries out the reaction [protein]-L-glutamate 5-O-methyl ester + H2O = L-glutamyl-[protein] + methanol + H(+). The catalysed reaction is L-glutaminyl-[protein] + H2O = L-glutamyl-[protein] + NH4(+). In terms of biological role, involved in chemotaxis. Part of a chemotaxis signal transduction system that modulates chemotaxis in response to various stimuli. Catalyzes the demethylation of specific methylglutamate residues introduced into the chemoreceptors (methyl-accepting chemotaxis proteins or MCP) by CheR. Also mediates the irreversible deamidation of specific glutamine residues to glutamic acid. This chain is Protein-glutamate methylesterase/protein-glutamine glutaminase, found in Rhodopseudomonas palustris (strain HaA2).